A 435-amino-acid polypeptide reads, in one-letter code: Glutamate-1-semialdehyde 2,1-aminomutase (435 aa).

At K266 the chain carries N6-(pyridoxal phosphate)lysine.

This sequence belongs to the class-III pyridoxal-phosphate-dependent aminotransferase family. HemL subfamily. As to quaternary structure, homodimer. It depends on pyridoxal 5'-phosphate as a cofactor.

The protein resides in the cytoplasm. The catalysed reaction is (S)-4-amino-5-oxopentanoate = 5-aminolevulinate. It participates in porphyrin-containing compound metabolism; protoporphyrin-IX biosynthesis; 5-aminolevulinate from L-glutamyl-tRNA(Glu): step 2/2. The chain is Glutamate-1-semialdehyde 2,1-aminomutase from Coxiella burnetii (strain RSA 331 / Henzerling II).